We begin with the raw amino-acid sequence, 140 residues long: Small ribosomal subunit protein uS12 (140 aa).

The interval 1–28 (MPTINQLVRKSRKALEKKSTAPALQKGY) is disordered. At Asp102 the chain carries 3-methylthioaspartic acid. The segment at 119–140 (GVDKRRQSRSKYGAKRPKEAKK) is disordered. A compositionally biased stretch (basic residues) spans 124 to 140 (RQSRSKYGAKRPKEAKK).

Belongs to the universal ribosomal protein uS12 family. As to quaternary structure, part of the 30S ribosomal subunit. Contacts proteins S8 and S17. May interact with IF1 in the 30S initiation complex.

Functionally, with S4 and S5 plays an important role in translational accuracy. Interacts with and stabilizes bases of the 16S rRNA that are involved in tRNA selection in the A site and with the mRNA backbone. Located at the interface of the 30S and 50S subunits, it traverses the body of the 30S subunit contacting proteins on the other side and probably holding the rRNA structure together. The combined cluster of proteins S8, S12 and S17 appears to hold together the shoulder and platform of the 30S subunit. This Clostridioides difficile (strain 630) (Peptoclostridium difficile) protein is Small ribosomal subunit protein uS12.